Reading from the N-terminus, the 235-residue chain is Lipoprotein signal peptidase (235 aa).

The disordered stretch occupies residues 1–23; it reads MTDETSGPAEPVTDAPGDAESPA. 3 consecutive transmembrane segments (helical) span residues 31–51, 84–104, and 108–128; these read LLLTVAAVVLFLDVVTKVLAV, GYTWVLTLVATGVVIGIIWMG, and VSPWWALGLGLILGGATGNLV. Catalysis depends on residues D144 and D158. The helical transmembrane segment at 156 to 176 threads the bilayer; sequence VADPSVVGGAILLVALSLFGF. The interval 185 to 235 is disordered; it reads RPGEDAEPSAGASDSTPEAPAADGPDKPAGPVGPEDAAEESKTVGHQAEPS. Low complexity predominate over residues 201–218; it reads PEAPAADGPDKPAGPVGP.

It belongs to the peptidase A8 family.

It localises to the cell membrane. The catalysed reaction is Release of signal peptides from bacterial membrane prolipoproteins. Hydrolyzes -Xaa-Yaa-Zaa-|-(S,diacylglyceryl)Cys-, in which Xaa is hydrophobic (preferably Leu), and Yaa (Ala or Ser) and Zaa (Gly or Ala) have small, neutral side chains.. Its pathway is protein modification; lipoprotein biosynthesis (signal peptide cleavage). In terms of biological role, this protein specifically catalyzes the removal of signal peptides from prolipoproteins. The polypeptide is Lipoprotein signal peptidase (Mycolicibacterium smegmatis (strain ATCC 700084 / mc(2)155) (Mycobacterium smegmatis)).